Reading from the N-terminus, the 400-residue chain is Elongation factor Tu 2 (400 aa).

The tr-type G domain maps to 10–209; that stretch reads KPHLNIGTIG…AVDSYIPLPQ (200 aa). A G1 region spans residues 19–26; it reads GHIDHGKT. 19 to 26 contributes to the GTP binding site; that stretch reads GHIDHGKT. Residue Thr26 coordinates Mg(2+). The segment at 60 to 64 is G2; sequence GITIN. The G3 stretch occupies residues 81 to 84; the sequence is DCPG. GTP is bound by residues 81–85 and 136–139; these read DCPGH and NKID. The tract at residues 136–139 is G4; it reads NKID. The tract at residues 174–176 is G5; the sequence is SAL.

The protein belongs to the TRAFAC class translation factor GTPase superfamily. Classic translation factor GTPase family. EF-Tu/EF-1A subfamily. Monomer.

It localises to the cytoplasm. It catalyses the reaction GTP + H2O = GDP + phosphate + H(+). In terms of biological role, GTP hydrolase that promotes the GTP-dependent binding of aminoacyl-tRNA to the A-site of ribosomes during protein biosynthesis. The sequence is that of Elongation factor Tu 2 from Syntrophomonas wolfei subsp. wolfei (strain DSM 2245B / Goettingen).